A 338-amino-acid polypeptide reads, in one-letter code: Fructose-1,6-bisphosphatase class 1 (338 aa).

Mg(2+) contacts are provided by Glu-90, Asp-112, Leu-114, and Asp-115. Substrate is bound by residues 115–118 (DGSS), Asn-207, and Lys-273. Glu-279 contacts Mg(2+).

Belongs to the FBPase class 1 family. As to quaternary structure, homotetramer. The cofactor is Mg(2+).

It localises to the cytoplasm. The enzyme catalyses beta-D-fructose 1,6-bisphosphate + H2O = beta-D-fructose 6-phosphate + phosphate. Its pathway is carbohydrate biosynthesis; gluconeogenesis. The chain is Fructose-1,6-bisphosphatase class 1 from Stenotrophomonas maltophilia (strain R551-3).